The sequence spans 309 residues: Olfactory receptor 1A2 (309 aa).

The Extracellular portion of the chain corresponds to 1–25; the sequence is MKKENQSFNLDFILLGVTSQQEQNN. Asn5 is a glycosylation site (N-linked (GlcNAc...) asparagine). A helical membrane pass occupies residues 26-49; sequence VFFVIFLCIYPITLTGNLLIILAI. Topologically, residues 50-57 are cytoplasmic; sequence CADIRLHN. The helical transmembrane segment at 58-79 threads the bilayer; sequence PMYFLLANLSLVDIIFSSVTIP. Residues 80–100 lie on the Extracellular side of the membrane; sequence KVLANHLLGSKFISFGGCLMQ. Cys97 and Cys189 are joined by a disulfide. Residues 101-120 form a helical membrane-spanning segment; sequence MYFMIALAKADSYTLAAMAY. At 121–139 the chain is on the cytoplasmic side; sequence DRAVAISCPLHYTTIMSPR. Residues 140-158 traverse the membrane as a helical segment; that stretch reads SCILLIAGSWVIGNTSALP. Residues 159–195 lie on the Extracellular side of the membrane; it reads HTLLTASLSFCGNQEVANFYCDIMPLLKLSCSDVHFN. A helical transmembrane segment spans residues 196-218; that stretch reads VKMMYLGVGVFSLPLLCIIVSYV. Residues 219-235 lie on the Cytoplasmic side of the membrane; the sequence is QVFSTVFQVPSTKSLFK. Residues 236–258 traverse the membrane as a helical segment; sequence AFCTCGSHLTVVFLYYGTTMGMY. The Extracellular segment spans residues 259–270; sequence FRPLTSYSPKDA. A helical membrane pass occupies residues 271 to 290; that stretch reads VITVMYVAVTPALNPFIYSL. Residues 291 to 309 lie on the Cytoplasmic side of the membrane; the sequence is RNWDMKAALQKLFSKRISS.

It belongs to the G-protein coupled receptor 1 family.

The protein resides in the cell membrane. In terms of biological role, odorant receptor. This is Olfactory receptor 1A2 (OR1A2) from Homo sapiens (Human).